The primary structure comprises 1592 residues: ABC transporter ATP-binding protein/permease VMR1 (1592 aa).

Topologically, residues 1–33 (MGTDPLIIRNNGSFWEVDDFTRLGRTQLLSYYL) are vacuolar. A glycan (N-linked (GlcNAc...) asparagine) is linked at Asn11. A helical transmembrane segment spans residues 34–54 (PLAIIASIGIFALCRSGLSRY). Topologically, residues 55–74 (VRSAECDLVNEYLFGAQEER) are cytoplasmic. Residues 75–95 (KEDNSIERLLRNSNTQANYVN) form a helical membrane-spanning segment. The Vacuolar portion of the chain corresponds to 96–100 (VKKQG). The helical transmembrane segment at 101–121 (RILKLRHFDITTIDVKQIDAK) threads the bilayer. Residues 122–131 (NHGGLTFSRP) lie on the Cytoplasmic side of the membrane. A helical transmembrane segment spans residues 132 to 152 (STSDHLRKSSEIVLMSLQIIG). Over 153 to 170 (LSFLRVTKINIELTNRDV) the chain is Vacuolar. Residues 171–191 (TTLLLFWLILLSLSILRVYKR) traverse the membrane as a helical segment. The Cytoplasmic segment spans residues 192 to 329 (STNLWAICFT…NKHINNLTLA (138 aa)). A helical membrane pass occupies residues 330–350 (LFESFKTYLLIGMLWVLVNSI). The 295-residue stretch at 338-632 (LLIGMLWVLV…LSNMLSFINQ (295 aa)) folds into the ABC transmembrane type-1 1 domain. Residues 351–379 (VNLLPTILMKRFLEIVDNPNRSSSCMNLA) are Vacuolar-facing. An N-linked (GlcNAc...) asparagine glycan is attached at Asn370. Residues 380–400 (WLYIIGMFICRLTLAICNSQG) form a helical membrane-spanning segment. Residues 401–465 (QFVSDKICLR…SFKVSELANY (65 aa)) lie on the Cytoplasmic side of the membrane. The chain crosses the membrane as a helical span at residues 466–486 (LYVTVQAVIMIIVVVGLLFNF). The Vacuolar segment spans residues 487 to 489 (LGV). The helical transmembrane segment at 490–510 (SAFAGISIILVMFPLNFLLAN) threads the bilayer. Topologically, residues 511–572 (LLGKFQKQTL…SLLKKSLVWS (62 aa)) are cytoplasmic. A helical transmembrane segment spans residues 573-593 (VTSFLWFVTPTLVTGVTFAIC). Residues 594–614 (TFVQHEDLNAPLAFTTLSLFT) are Vacuolar-facing. Residues 615-635 (LLKTPLDQLSNMLSFINQSKV) traverse the membrane as a helical segment. The Cytoplasmic portion of the chain corresponds to 636–989 (SLKRISDFLR…ALTALFALYI (354 aa)). In terms of domain architecture, ABC transporter 1 spans 664 to 908 (IEFKNATLTW…GLFKEKYVQL (245 aa)). An ATP-binding site is contributed by 702-709 (GSTGSGKS). The 302-residue stretch at 981–1282 (LTALFALYIT…LVRLYSTFEM (302 aa)) folds into the ABC transmembrane type-1 2 domain. The chain crosses the membrane as a helical span at residues 990–1010 (TAQILFISQSWWIRHWVNDTN). At 1011–1051 (VRINAPGFAMDTLPLKGMTDSSKNKHNAFYYLTVYFLIGII) the chain is on the vacuolar side. Residues 1052–1072 (QAMLGGFKTMMTFLSGMRASR) traverse the membrane as a helical segment. The Cytoplasmic segment spans residues 1073-1115 (KIFNNLLDLVLHAQIRFFDVTPVGRIMNRFSKDIEGVDQELIP). Residues 1116 to 1136 (YLEVTIFCLIQCASIIFLITV) traverse the membrane as a helical segment. Position 1137 (Ile1137) is a topological domain, vacuolar. The helical transmembrane segment at 1138–1158 (TPRFLTVAVIVFVLYFFVGKW) threads the bilayer. Residues 1159 to 1229 (YLTASRELKR…VTVKWFSFRV (71 aa)) are Cytoplasmic-facing. Residues 1230–1250 (DMIGAFIVLASGSFILLNIAN) traverse the membrane as a helical segment. Residues 1251 to 1252 (ID) lie on the Vacuolar side of the membrane. A helical transmembrane segment spans residues 1253 to 1273 (SGLAGISLTYAILFTDGALWL). Topologically, residues 1274–1592 (VRLYSTFEMN…IAKQSSKMMK (319 aa)) are cytoplasmic. The region spanning 1323 to 1572 (IEIENLSLRY…ERGIFYSMCR (250 aa)) is the ABC transporter 2 domain. Residue 1357 to 1364 (GRTGAGKS) coordinates ATP.

This sequence belongs to the ABC transporter superfamily. ABC transporter which may be involved in multidrug resistance.

Its subcellular location is the vacuole membrane. This Saccharomyces cerevisiae (strain ATCC 204508 / S288c) (Baker's yeast) protein is ABC transporter ATP-binding protein/permease VMR1 (VMR1).